Consider the following 1921-residue polypeptide: Histone transcription regulator 3 homolog (1921 aa).

4 disordered regions span residues 350 to 439 (IGEV…LEKQ), 1402 to 1466 (GEDA…ATPV), 1738 to 1769 (PGSA…KTRV), and 1799 to 1921 (KGPP…SAPE). 2 stretches are compositionally biased toward basic and acidic residues: residues 353 to 376 (VENK…KKEA) and 391 to 400 (TTVKTEDRDS). A compositionally biased stretch (polar residues) spans 413-422 (GTTSSSQPPS). A compositionally biased stretch (basic and acidic residues) spans 428–439 (RGADEPAELEKQ). Residues 1402 to 1425 (GEDADMESGDDSDSDSEVGSDSET) are compositionally biased toward acidic residues. Over residues 1757–1769 (GKKEDGKKEKTRV) the composition is skewed to basic and acidic residues. The span at 1806–1818 (SSNGSSSNSGTRS) shows a compositional bias: low complexity. Composition is skewed to basic and acidic residues over residues 1819 to 1836 (NSEE…KSTQ) and 1861 to 1890 (EADK…EKSA). The span at 1899 to 1910 (TPKSKSTGSNGV) shows a compositional bias: polar residues.

It belongs to the HIR3 family.

The protein resides in the nucleus. Its function is as follows. Has a role in a nucleosome assembly pathway that is required for the integrity of heterochromatin and proper chromosome segregation. This is Histone transcription regulator 3 homolog (HIR3) from Yarrowia lipolytica (strain CLIB 122 / E 150) (Yeast).